Consider the following 54-residue polypeptide: Large ribosomal subunit protein bL32 (54 aa).

The protein belongs to the bacterial ribosomal protein bL32 family.

The sequence is that of Large ribosomal subunit protein bL32 from Buchnera aphidicola subsp. Baizongia pistaciae (strain Bp).